The chain runs to 1008 residues: MAEEKMMRLSQVAKKLNVGTSTIIDHLSAKGYDIENNPNAKITVDMYAFLSKEYESSAQVKKEAESLTIGKKHMGDVVIDADQVNVAPEHDEEDEVRIINNSPAEAVVPEVPAVTAQEAPKTAPTAESPEDVKGNVTLQGLKVLGKIDLGTADKDSKKSAKNTKPVEKVAAEKPIEKAKPETVAPPVEPKPEPKQETPKTEQPVKKETPKAETQKPPVADKPAEKTPVVEEPAAPVADVPVQVVQAHADKLQGLTVLGKIQLPDKKKEPTRVASSDEVVDKNKNKRKRKRLNDGPNKPAGANPNGPRPAGSNPNGPRPQGTNPNGPRPQGQGGNPNGPRPAGGPNRPGVPNRPNSNGPKPTLTKASEKGEVTGKQIQDKIKATMAKLSGGGTKSGPVNRAKYRKDKRSAMADAEEERLMAEQEDAKSLKVAEFISASDLASLMDVSINEVISKCMAMGMFVSINQRLDAEAITIIADEFGYDVNFQTTGEEDDVTDVDQDDPASLIDRAPIVTIMGHVDHGKTSLLDYIRKSKVVAGEAGGITQHIGAYNVMTDSGKPITFLDTPGHEAFTAMRARGAKITDIVIIVVAADDSVMPQTKEAINHARVAGVPIIIAINKIDKPAANPDKIKEELSKENILVEDWGGKYQCQAISAKAGTGISELLDKVLLEAEMLELKANPDKRAIGAVIEASLDKGRGYVTNVLVEAGTLRIGDIILAGAHFGRVKAMVDHTGKKLKEAGPAMPLQVLGLNGAPQAGDKFQVMETEREAREISSKREQLLREQSIRTKKHITLDEIGRRLAIGNFKELNIIVKADVDGSVEALSDSLLKLSTEEIQIRILHKGVGQISESDILLASASDAIIVAFQVRPSTSARKLAEQEQIEIRMYSIIYDAINEVKDAMEGMLEPKMEEVVLGTIDVRDVFKITKVGTVAGAYVSEGIVKRNNQVRLIRDGIVMFTGTISALKRFKDDVSEVKTSYECGISLKGYNDIQIGDQIEAFEQKEVKRTL.

3 disordered regions span residues 113–136 (AVTAQEAPKTAPTAESPEDVKGNV), 153–235 (DKDS…PAAP), and 253–405 (GLTV…YRKD). 2 stretches are compositionally biased toward basic and acidic residues: residues 153–180 (DKDSKKSAKNTKPVEKVAAEKPIEKAKP) and 189–213 (PKPEPKQETPKTEQPVKKETPKAET). Low complexity-rich tracts occupy residues 294 to 329 (GPNKPAGANPNGPRPAGSNPNGPRPQGTNPNGPRPQ) and 342 to 358 (GGPNRPGVPNRPNSNGP). Positions 365-381 (ASEKGEVTGKQIQDKIK) are enriched in basic and acidic residues. The tr-type G domain maps to 507–677 (DRAPIVTIMG…LLEAEMLELK (171 aa)). Positions 516–523 (GHVDHGKT) are G1. 516–523 (GHVDHGKT) serves as a coordination point for GTP. Residues 541–545 (GITQH) form a G2 region. Residues 563–566 (DTPG) form a G3 region. GTP is bound by residues 563–567 (DTPGH) and 617–620 (NKID). A G4 region spans residues 617-620 (NKID). Residues 653 to 655 (SAK) form a G5 region.

This sequence belongs to the TRAFAC class translation factor GTPase superfamily. Classic translation factor GTPase family. IF-2 subfamily.

The protein resides in the cytoplasm. One of the essential components for the initiation of protein synthesis. Protects formylmethionyl-tRNA from spontaneous hydrolysis and promotes its binding to the 30S ribosomal subunits. Also involved in the hydrolysis of GTP during the formation of the 70S ribosomal complex. The protein is Translation initiation factor IF-2 of Cytophaga hutchinsonii (strain ATCC 33406 / DSM 1761 / CIP 103989 / NBRC 15051 / NCIMB 9469 / D465).